The following is a 162-amino-acid chain: Protein FAM167B (162 aa).

The protein belongs to the FAM167 (SEC) family.

The polypeptide is Protein FAM167B (Fam167b) (Mus musculus (Mouse)).